The following is a 63-amino-acid chain: Large ribosomal subunit protein bL28 (63 aa).

The protein belongs to the bacterial ribosomal protein bL28 family.

The polypeptide is Large ribosomal subunit protein bL28 (Heliobacterium modesticaldum (strain ATCC 51547 / Ice1)).